The chain runs to 188 residues: Elongation factor P-like protein (188 aa).

It belongs to the elongation factor P family.

The polypeptide is Elongation factor P-like protein (Vibrio vulnificus (strain CMCP6)).